The sequence spans 778 residues: Protein SPT2 homolog (778 aa).

Disordered stretches follow at residues 1-21 (MDFHSVLKMAAAKPGSDGIAK), 50-625 (KKDE…AKPK), and 639-685 (VPKS…DDDD). The tract at residues 1–665 (MDFHSVLKMA…PGHRPAMRPP (665 aa)) is important for interaction with DNA. Residues 44 to 83 (VQAFLRKKDEESRRKETVEKRKKEDLLAKRKELKHDRKAR) are a coiled coil. Positions 50 to 78 (KKDEESRRKETVEKRKKEDLLAKRKELKH) are enriched in basic and acidic residues. Residues 114-135 (EEDQNDNMAAEGEEYMTEEELY) are compositionally biased toward acidic residues. The span at 153 to 167 (QKVPKPAPGKKPPTP) shows a compositional bias: pro residues. The span at 190–227 (RPVKKEERLRTAEELKELEFLERKAQKADRKDPKRNEQ) shows a compositional bias: basic and acidic residues. Residues 193 to 221 (KKEERLRTAEELKELEFLERKAQKADRKD) adopt a coiled-coil conformation. A compositionally biased stretch (polar residues) spans 242 to 269 (LKGTHSGNSKSSSTEQNGTIRKSSSDTG). Over residues 270–286 (SRTEKSGSVFHTKESKK) the composition is skewed to basic and acidic residues. Low complexity predominate over residues 312-335 (SSQPSAASNSAFGRPSGSARPSGS). 2 stretches are compositionally biased toward gly residues: residues 336–357 (SGPGRPLGGSGSSSGKSTGGSA) and 365–384 (GGSGSGSGKPMGGSGSGKPI). Residues 385–394 (GGLHSSHGSG) show a composition bias toward low complexity. A compositionally biased stretch (gly residues) spans 395 to 417 (KPTGGTGSGSGKPTGASGSGSGK). 2 stretches are compositionally biased toward low complexity: residues 418–493 (PTGS…SGSA) and 506–559 (GSGS…PSSS). Positions 588 to 604 (VRPNSTSVPGSARSSLG) are enriched in polar residues. The segment covering 662–671 (MRPPGPPLPP) has biased composition (pro residues). An important for interaction with histones region spans residues 666-778 (GPPLPPITSS…QLKAAKKMSR (113 aa)). The stretch at 735-778 (REQQKEEARSLRLGIQEDLEELQREEEELKRKAKQLKAAKKMSR) forms a coiled coil.

It belongs to the SPT2 family. In terms of assembly, interacts with histones. Interacts with a heterotetrameric complex formed by histone H3 and H4, especially when the histone tetramer is not bound to DNA.

It is found in the nucleus. The protein resides in the nucleolus. In terms of biological role, histone chaperone that stabilizes pre-existing histone tetramers and regulates replication-independent histone exchange on chromatin. Required for normal chromatin refolding in the coding region of transcribed genes, and for the suppression of spurious transcription. Binds DNA and histones and promotes nucleosome assembly (in vitro). Facilitates formation of tetrameric histone complexes containing histone H3 and H4. Modulates RNA polymerase 1-mediated transcription. Binds DNA, with a preference for branched DNA species, such as Y-form DNA and Holliday junction DNA. In Xenopus tropicalis (Western clawed frog), this protein is Protein SPT2 homolog (spty2d1).